Here is a 173-residue protein sequence, read N- to C-terminus: Protein-export protein SecB (173 aa).

It belongs to the SecB family. As to quaternary structure, homotetramer, a dimer of dimers. One homotetramer interacts with 1 SecA dimer.

It localises to the cytoplasm. Functionally, one of the proteins required for the normal export of preproteins out of the cell cytoplasm. It is a molecular chaperone that binds to a subset of precursor proteins, maintaining them in a translocation-competent state. It also specifically binds to its receptor SecA. This Ralstonia nicotianae (strain ATCC BAA-1114 / GMI1000) (Ralstonia solanacearum) protein is Protein-export protein SecB.